The sequence spans 287 residues: ATP synthase gamma chain (287 aa).

Belongs to the ATPase gamma chain family. As to quaternary structure, F-type ATPases have 2 components, CF(1) - the catalytic core - and CF(0) - the membrane proton channel. CF(1) has five subunits: alpha(3), beta(3), gamma(1), delta(1), epsilon(1). CF(0) has three main subunits: a, b and c.

Its subcellular location is the cell inner membrane. In terms of biological role, produces ATP from ADP in the presence of a proton gradient across the membrane. The gamma chain is believed to be important in regulating ATPase activity and the flow of protons through the CF(0) complex. The polypeptide is ATP synthase gamma chain (Stenotrophomonas maltophilia (strain R551-3)).